The primary structure comprises 521 residues: Maturase K (521 aa).

Belongs to the intron maturase 2 family. MatK subfamily.

It is found in the plastid. The protein resides in the chloroplast. Usually encoded in the trnK tRNA gene intron. Probably assists in splicing its own and other chloroplast group II introns. The polypeptide is Maturase K (Anthericum liliago (St-Bernard's lily)).